Reading from the N-terminus, the 159-residue chain is MTHCCSPCCQPTCCRTTCWKPTTVTTCSSTPCCQPSCCVSSCCQPCCRPTCCQNTCCQPICVTSCCQPSCCSTPCCQPTCCGQTSCGSSCGQSSSCAPVYCRRTCYHPTTVCLPGCLNQSCGSNCCQPCCRPACCETTCCRTTCFQPTCVSSCCQPSCC.

15 consecutive repeat copies span residues 8–12 (CCQPT), 13–17 (CCRTT), 32–36 (CCQPS), 37–41 (CCVSS), 46–50 (CCRPT), 51–55 (CCQNT), 56–60 (CCQPI), 65–69 (CCQPS), 70–74 (CCSTP), 75–79 (CCQPT), 80–84 (CCGQT), 129–133 (CCRPA), 134–138 (CCETT), 139–142 (CCRT), and 153–157 (CCQPS). The interval 8–157 (CCQPTCCRTT…TCVSSCCQPS (150 aa)) is 15 X 5 AA repeats of C-C-[RQVSGE]-[SPSNQ]-[TASPI].

It belongs to the KRTAP type 9 family. As to quaternary structure, interacts with hair keratins.

Functionally, in the hair cortex, hair keratin intermediate filaments are embedded in an interfilamentous matrix, consisting of hair keratin-associated proteins (KRTAP), which are essential for the formation of a rigid and resistant hair shaft through their extensive disulfide bond cross-linking with abundant cysteine residues of hair keratins. The matrix proteins include the high-sulfur and high-glycine-tyrosine keratins. This chain is Keratin-associated protein 9-8 (KRTAP9-8), found in Homo sapiens (Human).